Reading from the N-terminus, the 1006-residue chain is E3 ubiquitin-protein ligase MIB1 (1006 aa).

The MIB/HERC2 1 domain occupies 6-74 (NNRVMVEGVG…AYDLRILDSA (69 aa)). Residues 80-132 (HDGTMCDTCRQQPIIGIRWKCAECTNYDLCTVCYHGDKHHLRHRFYRITTPGS) form a ZZ-type zinc finger. Residues Cys-85, Cys-88, Cys-100, Cys-103, Cys-109, Cys-112, His-118, and His-122 each contribute to the Zn(2+) site. Positions 143 to 221 (SKKITARGIF…MSDLKCVQDA (79 aa)) constitute an MIB/HERC2 2 domain. Phosphoserine is present on Ser-408. 9 ANK repeats span residues 430-460 (DLNE…DVNG), 463-492 (AGHT…DVEA), 496-525 (DGDR…DLNA), 529-558 (RRQT…HPSL), 562-591 (EGDT…DVTI), 595-627 (NGFN…IVDE), 631-661 (DGYT…NLDI), 665-694 (NQQT…KLDI), and 698-729 (DGDT…KVDA). 2 consecutive RING-type zinc fingers follow at residues 819–854 (CMVC…LICK) and 866–901 (CVVC…VQCR). The stretch at 935-962 (QKDKDNTNVNADVQKLQQQLQDIKEQTM) forms a coiled coil. An RING-type 3 zinc finger spans residues 963–996 (CPVCLDRLKNMIFLCGHGTCQLCGDRMSECPICR).

Interacts with CEP131 and PCM1. In terms of processing, ubiquitinated; possibly via autoubiquitination. Ubiquitinated; this modification is inhibited in response to cellular stress, such as ultraviolet light (UV) radiation or heat shock. In terms of tissue distribution, widely expressed at low level. Expressed at higher level in spinal cord, ovary, whole brain, and all specific brain regions examined.

It is found in the cytoplasm. The protein localises to the cytoskeleton. Its subcellular location is the microtubule organizing center. It localises to the centrosome. The protein resides in the centriolar satellite. It is found in the cell membrane. It catalyses the reaction S-ubiquitinyl-[E2 ubiquitin-conjugating enzyme]-L-cysteine + [acceptor protein]-L-lysine = [E2 ubiquitin-conjugating enzyme]-L-cysteine + N(6)-ubiquitinyl-[acceptor protein]-L-lysine.. It participates in protein modification; protein ubiquitination. Its function is as follows. E3 ubiquitin-protein ligase that mediates ubiquitination of Delta receptors, which act as ligands of Notch proteins. Positively regulates the Delta-mediated Notch signaling by ubiquitinating the intracellular domain of Delta, leading to endocytosis of Delta receptors. Probably mediates ubiquitination and subsequent proteasomal degradation of DAPK1, thereby antagonizing anti-apoptotic effects of DAPK1 to promote TNF-induced apoptosis. Involved in ubiquitination of centriolar satellite CEP131, CEP290 and PCM1 proteins and hence inhibits primary cilium formation in proliferating cells. Mediates 'Lys-63'-linked polyubiquitination of TBK1, which probably participates in kinase activation. In terms of biological role, (Microbial infection) During adenovirus infection, mediates ubiquitination of Core-capsid bridging protein. This allows viral genome delivery into nucleus for infection. This chain is E3 ubiquitin-protein ligase MIB1 (MIB1), found in Homo sapiens (Human).